The chain runs to 1018 residues: Cytadherence high molecular weight protein 1 (1018 aa).

Coiled coils occupy residues 782-815 (NRFL…AKDL) and 849-880 (ELVR…AVYK).

Post-translationally, phosphorylated mainly on serine residues.

It localises to the cell projection. It is found in the attachment organelle membrane. In terms of biological role, component of the cytoskeleton-like structure which stabilizes the shape of the wall-less Mycoplasma. This cytoskeleton-like network of accessory proteins containing HMW proteins 1 to 5 allows the proper anchoring of cytadhesin proteins in the mycoplasmal membrane at the attachment organelle. This is Cytadherence high molecular weight protein 1 (hmw1) from Mycoplasma pneumoniae (strain ATCC 29342 / M129 / Subtype 1) (Mycoplasmoides pneumoniae).